The chain runs to 265 residues: MQPDLHCRTLAAHTLKHFRALSPLTHCMTNDVVQTFTANTLLALGASPAMVIDPVEARPFAAIANALLVNVGTLTASRADAMRAAVESAYDAKTPWTLDPVAVGALEFRRRFCLDLLSLRPAAIRGNASEILALSGMALGGRGVDTTEAALAALPAAQALAHQIDCIVVVTGEIDYVTNGQRTLSIPGGDPLMTRIVGTGCALSAVVAASCALPGAALDNVASACCWMKLAGQAAAERSEGPGSFIPAFLDALYHLDVEAANEEN.

Methionine 50 contributes to the substrate binding site. ATP contacts are provided by arginine 125 and threonine 171. Residue glycine 198 coordinates substrate.

Belongs to the Thz kinase family. Mg(2+) serves as cofactor.

The enzyme catalyses 5-(2-hydroxyethyl)-4-methylthiazole + ATP = 4-methyl-5-(2-phosphooxyethyl)-thiazole + ADP + H(+). Its pathway is cofactor biosynthesis; thiamine diphosphate biosynthesis; 4-methyl-5-(2-phosphoethyl)-thiazole from 5-(2-hydroxyethyl)-4-methylthiazole: step 1/1. In terms of biological role, catalyzes the phosphorylation of the hydroxyl group of 4-methyl-5-beta-hydroxyethylthiazole (THZ). This chain is Hydroxyethylthiazole kinase, found in Salmonella choleraesuis (strain SC-B67).